The sequence spans 690 residues: Ras guanyl-releasing protein 3 (690 aa).

The 123-residue stretch at 3–125 folds into the N-terminal Ras-GEF domain; the sequence is SSGLGKAATL…SLIDISSIPS (123 aa). The Ras-GEF domain occupies 152–383; it reads EPIELAEHLT…YKLSLVLEPR (232 aa). EF-hand domains lie at 420 to 455 and 458 to 484; these read HIRK…FPFL and FCVL…AKSQ. Ca(2+)-binding residues include Asp433, Asp435, Asp437, Tyr439, Asp444, Asp462, Asp464, Asp466, and Glu473. Residues 494-544 form a Phorbol-ester/DAG-type zinc finger; the sequence is IHNFQEMTYLKPTFCEHCAGFLWGIIKQGYKCKDCGANCHKQCKDLLVLAC. Residues 667–690 form a disordered region; it reads VDRGTEFELDQDEGEETRQDGEDG.

The protein belongs to the RASGRP family.

Guanine nucleotide exchange factor (GEF) for Ras and Rap1. This Homo sapiens (Human) protein is Ras guanyl-releasing protein 3 (RASGRP3).